The following is a 331-amino-acid chain: uncharacterized protein (331 aa).

WD repeat units follow at residues 53 to 92 (KAHT…KSAV), 97 to 139 (QQST…KLIR), 144 to 184 (AHND…DSTD), and 300 to 331 (ASEE…AFRV).

The protein resides in the cytoplasm. Its subcellular location is the nucleus. This is an uncharacterized protein from Schizosaccharomyces pombe (strain 972 / ATCC 24843) (Fission yeast).